The sequence spans 438 residues: Forkhead box protein J1 (438 aa).

The segment at residues 123 to 217 (KPPYSYATLI…MNGAMKKRRL (95 aa)) is a DNA-binding region (fork-head).

This sequence belongs to the FOXJ1 family.

The protein localises to the nucleus. Key transcription factor required for motile ciliogenesis. Activates genes essential for motile cilia formation and function. This chain is Forkhead box protein J1, found in Xenopus tropicalis (Western clawed frog).